We begin with the raw amino-acid sequence, 965 residues long: Phosphatidylethanolamine N-methyltransferase (965 aa).

Residues 1–55 (MSSSAADPFAARLNSDVRQRHPTASATSKNVEGTSQQKQQQQQQQSEANAAASRV) are disordered. At 1-91 (MSSSAADPFA…DPREPKNLSD (91 aa)) the chain is on the lumenal side. A compositionally biased stretch (polar residues) spans 22–35 (PTASATSKNVEGTS). Low complexity predominate over residues 36-45 (QQKQQQQQQQ). The helical transmembrane segment at 92 to 112 (VAVLAIIALHFLAAYYLPWGV) threads the bilayer. The Cytoplasmic portion of the chain corresponds to 113–115 (KRP). The chain crosses the membrane as a helical span at residues 116 to 136 (LFAAIFMFWRLAYNVGIGYLL). The Lumenal portion of the chain corresponds to 137–201 (TIQSKYKLLV…EYNTWLTFRR (65 aa)). The chain crosses the membrane as a helical span at residues 202-222 (VVDLILMCDFISYCLFAIVCA). The Cytoplasmic portion of the chain corresponds to 223 to 229 (HKPDGEG). The helical transmembrane segment at 230–250 (LFMCFARWAAGITLVGFNLWV) threads the bilayer. The Lumenal segment spans residues 251–279 (KLDAHRVVKDYAWYWGDFFYLIEQELTFD). The helical transmembrane segment at 280 to 300 (GVFELAPHPMYSIGYAGYYGI) threads the bilayer. The Cytoplasmic portion of the chain corresponds to 301–306 (SMMAAS). A helical membrane pass occupies residues 307–327 (YDVLFISIIAHAAQFAFLVIV). Over 328–389 (ENPHIEKTYN…IGLKNLDFFR (62 aa)) the chain is Lumenal. A helical transmembrane segment spans residues 390 to 410 (ITDVAIVLLCAYLAVVTMVTP). Topologically, residues 411 to 417 (NTRFYQA) are cytoplasmic. A helical membrane pass occupies residues 418–438 (LFVLHALAWRLWYSAGLGVIL). Topologically, residues 439–467 (TMQSEEKMFTRHFLKYGESVGEAWRQWKG) are lumenal. Residues 468-488 (IYHLSNCLCHASFIAASYKMY) form a helical membrane-spanning segment. The Cytoplasmic portion of the chain corresponds to 489-496 (EFPADWTY). A helical membrane pass occupies residues 497–517 (GWALLKHVVGLSLIALQVWTA). Over 518–573 (TSIYESLGEFGWFYGDFFFDSKRQLTYTSIYRFLNNPERVFGTAGLWGAALITWSR) the chain is Lumenal. The chain crosses the membrane as a helical span at residues 574–594 (AIFLMALAGHFLTLAFLAYVE). The Cytoplasmic portion of the chain corresponds to 595 to 965 (KPHMQKVYGR…TTPVDSKFSE (371 aa)).

This sequence belongs to the class VI-like SAM-binding methyltransferase superfamily. CHO2 family.

It is found in the endoplasmic reticulum membrane. It catalyses the reaction a 1,2-diacyl-sn-glycero-3-phosphoethanolamine + S-adenosyl-L-methionine = a 1,2-diacyl-sn-glycero-3-phospho-N-methylethanolamine + S-adenosyl-L-homocysteine + H(+). Its pathway is phospholipid metabolism; phosphatidylcholine biosynthesis. Functionally, catalyzes the first step of the methylation pathway of phosphatidylcholine biosynthesis, the SAM-dependent methylation of phosphatidylethanolamine (PE) to phosphatidylmonomethylethanolamine (PMME). The polypeptide is Phosphatidylethanolamine N-methyltransferase (Neurospora crassa (strain ATCC 24698 / 74-OR23-1A / CBS 708.71 / DSM 1257 / FGSC 987)).